The chain runs to 303 residues: Glycine--tRNA ligase alpha subunit (303 aa).

Belongs to the class-II aminoacyl-tRNA synthetase family. In terms of assembly, tetramer of two alpha and two beta subunits.

The protein resides in the cytoplasm. The catalysed reaction is tRNA(Gly) + glycine + ATP = glycyl-tRNA(Gly) + AMP + diphosphate. The chain is Glycine--tRNA ligase alpha subunit from Escherichia fergusonii (strain ATCC 35469 / DSM 13698 / CCUG 18766 / IAM 14443 / JCM 21226 / LMG 7866 / NBRC 102419 / NCTC 12128 / CDC 0568-73).